The sequence spans 694 residues: Polynucleotide 3'-phosphatase ZDP (694 aa).

2 consecutive PARP-type zinc fingers follow at residues 50 to 132 (VVAE…EQCG) and 165 to 247 (VIAD…EVNK). Positions 62, 65, 93, 96, 177, 180, 208, and 211 each coordinate Zn(2+). Residues 266–331 (AIADNELTEE…SPDSSKVISE (66 aa)) form a disordered region. The segment covering 302-321 (ESKKPASDEISEQKTKDVKN) has biased composition (basic and acidic residues). The segment covering 322–331 (SPDSSKVISE) has biased composition (polar residues). The PARP-type 3 zinc-finger motif lies at 328–410 (VISEYAKSSR…ALKELVQQCG (83 aa)). The Zn(2+) site is built by Cys340, Cys343, His371, and Cys374.

This sequence in the C-terminal section; belongs to the DNA 3' phosphatase family. As to quaternary structure, interacts with ROS1 (via the central region). Binds to XRCC1.

The protein localises to the nucleus. It is found in the nucleoplasm. It carries out the reaction a 3'end (2'-deoxyribonucleotide 3'-phosphate)-DNA + H2O = a 3'-end 2'-deoxyribonucleotide-DNA + phosphate. Activated by the presence of DNA. Stimulated by XRCC1. In terms of biological role, nick-sensing 3'-phosphoesterase involved in a base excision repair pathway required for active DNA demethylation. The N-terminal DNA-binding domain binds specifically to gap sites and sharply bends the target DNA. Lacks 5'-kinase activity but is capable of 3'-phosphoglycolate end processing. Inactive on 3'-alpha,beta-unsaturated aldehyde (3'-dRP). Protects partially genes from transcriptional silencing by preventing promoter DNA hypermethylation. The chain is Polynucleotide 3'-phosphatase ZDP (ZDP) from Arabidopsis thaliana (Mouse-ear cress).